The primary structure comprises 289 residues: Eukaryotic translation initiation factor 3 subunit G (289 aa).

A disordered region spans residues 1–33 (MSRPTKADWADDEEFDDPSALPPQQITTNKDGT). In terms of domain architecture, RRM spans 209–287 (ATLRVTNVSE…LILRVEFAKR (79 aa)).

This sequence belongs to the eIF-3 subunit G family. As to quaternary structure, component of the eukaryotic translation initiation factor 3 (eIF-3) complex.

It is found in the cytoplasm. Functionally, RNA-binding component of the eukaryotic translation initiation factor 3 (eIF-3) complex, which is involved in protein synthesis of a specialized repertoire of mRNAs and, together with other initiation factors, stimulates binding of mRNA and methionyl-tRNAi to the 40S ribosome. The eIF-3 complex specifically targets and initiates translation of a subset of mRNAs involved in cell proliferation. This subunit can bind 18S rRNA. In Emericella nidulans (strain FGSC A4 / ATCC 38163 / CBS 112.46 / NRRL 194 / M139) (Aspergillus nidulans), this protein is Eukaryotic translation initiation factor 3 subunit G (tif35).